A 258-amino-acid polypeptide reads, in one-letter code: Regulatory protein RecX (258 aa).

This sequence belongs to the RecX family.

It is found in the cytoplasm. Modulates RecA activity. The sequence is that of Regulatory protein RecX from Streptococcus equi subsp. zooepidemicus (strain MGCS10565).